Reading from the N-terminus, the 152-residue chain is Coiled-coil domain-containing protein 182 (152 aa).

Positions 46–109 (ADLEILQQKV…RLREEEDRGI (64 aa)) form a coiled coil.

The sequence is that of Coiled-coil domain-containing protein 182 (Ccdc182) from Mus musculus (Mouse).